The chain runs to 457 residues: Adenylosuccinate synthetase isozyme 1 (457 aa).

The segment at 1–25 (MSGTRASNDRPPSAGGVKRGRLQHE) is disordered. GTP-binding positions include 42-48 (GDEGKGK) and 70-72 (GHT). The active-site Proton acceptor is Asp43. Residues Asp43 and Gly70 each contribute to the Mg(2+) site. Residue Asp43 participates in substrate binding. IMP-binding positions include 43-46 (DEGK), 68-71 (NAGH), Thr163, Arg177, Asn256, Thr271, and Arg335. His71 functions as the Proton donor in the catalytic mechanism. 331-337 (VTTGRKR) provides a ligand contact to substrate. Residues Arg337, 363-365 (KLD), and 445-448 (GVGK) contribute to the GTP site.

This sequence belongs to the adenylosuccinate synthetase family. As to quaternary structure, homodimer. It depends on Mg(2+) as a cofactor. Predominantly expressed in the striated muscle tissues.

Its subcellular location is the cytoplasm. The catalysed reaction is IMP + L-aspartate + GTP = N(6)-(1,2-dicarboxyethyl)-AMP + GDP + phosphate + 2 H(+). The protein operates within purine metabolism; AMP biosynthesis via de novo pathway; AMP from IMP: step 1/2. In terms of biological role, component of the purine nucleotide cycle (PNC), which interconverts IMP and AMP to regulate the nucleotide levels in various tissues, and which contributes to glycolysis and ammoniagenesis. Catalyzes the first committed step in the biosynthesis of AMP from IMP. The polypeptide is Adenylosuccinate synthetase isozyme 1 (Sus scrofa (Pig)).